The primary structure comprises 396 residues: Protein btn1 (396 aa).

A run of 8 helical transmembrane segments spans residues 15 to 35 (CFLIFGLLNNLLYVIILSAAL), 45 to 65 (GVVLLSNIVPSLACKLSASIL), 76 to 96 (IGFCVFMSILGMQWIAWSSSV), 138 to 158 (LAGLFGASSYLVMTTWFNFSV), 161 to 181 (TLIISSFLPLFLLIMYFFVLP), 234 to 254 (FLVYFSEYTINIGVAPTLLFP), 296 to 316 (LAITQFIILLFTILQSALYLT), and 321 to 341 (FVLFLIFVEGLIGGTVYVNVY).

It belongs to the battenin family.

It localises to the endoplasmic reticulum membrane. It is found in the vacuole membrane. Functionally, involved in vacuolar transport and vacuole pH homeostasis. Also required for cytokinesis. In Schizosaccharomyces pombe (strain 972 / ATCC 24843) (Fission yeast), this protein is Protein btn1.